Consider the following 108-residue polypeptide: Insertion element IS629 uncharacterized 12 kDa protein S4062 (108 aa).

This sequence belongs to the transposase 8 family.

This chain is Insertion element IS629 uncharacterized 12 kDa protein S4062, found in Shigella flexneri.